The following is a 915-amino-acid chain: Clathrin coat assembly protein AP180 (915 aa).

Residues 14–145 (QYSVTGSAVA…FSYRQMAFDF (132 aa)) enclose the ENTH domain. Disordered regions lie at residues 285 to 326 (LEGK…DTSP), 391 to 425 (SVPSEAPISDPFAPEPSPPTTTTEPASASASATTA), and 497 to 522 (PETSAPVVTPTASTAPPVPATAPSPA). Residues Ser296, Ser300, and Ser306 each carry the phosphoserine modification. Polar residues predominate over residues 302 to 324 (LSKSSPATTVTSPNSTPAKTIDT). An O-linked (GlcNAc) threonine glycan is attached at Thr310. Ser313 carries the phosphoserine modification. Residue Thr317 is modified to Phosphothreonine. Low complexity-rich tracts occupy residues 410-425 (TTTTEPASASASATTA) and 500-511 (SAPVVTPTASTA). The span at 512–522 (PPVPATAPSPA) shows a compositional bias: pro residues. Ser594, Ser600, Pro627, Ser640, and Ser646 each carry phosphoserine. The span at 720–735 (TTPSTSSSSSFDPSGD) shows a compositional bias: low complexity. Positions 720 to 765 (TTPSTSSSSSFDPSGDLLMPTMAPSGQPAPVSMVPPSPAMSASKGL) are disordered. Ser775 carries the phosphoserine modification. Residues 817–855 (SAGVPPQGTVPPTSSVPPGAGAPSVGQPGAGYGMPPAGT) are disordered. Arg873 carries the post-translational modification Asymmetric dimethylarginine; alternate. An Omega-N-methylarginine; alternate modification is found at Arg873. The tract at residues 875–915 (PFGAAAVPGTQLSPSPTPATQSPKKPPAKDPLADLNIKDFL) is disordered. Residues 884–896 (TQLSPSPTPATQS) show a composition bias toward polar residues. The span at 901–915 (PAKDPLADLNIKDFL) shows a compositional bias: basic and acidic residues.

This sequence belongs to the PICALM/SNAP91 family. As to quaternary structure, binds AP2A2. Interacts with AP2B1; clathrin competes with SNAP91. Thr-310 can be modified by the addition of N-acetylglucosamine which can be further phosphorylated. The form with phosphorylated O-linked N-acetylglucosamine is predominant in brain synaptosomes. There is no evidence for direct Thr-310 phosphorylation.

It is found in the cell membrane. The protein localises to the membrane. It localises to the coated pit. Adaptins are components of the adapter complexes which link clathrin to receptors in coated vesicles. Clathrin-associated protein complexes are believed to interact with the cytoplasmic tails of membrane proteins, leading to their selection and concentration. Binding of AP180 to clathrin triskelia induces their assembly into 60-70 nm coats. The chain is Clathrin coat assembly protein AP180 (Snap91) from Rattus norvegicus (Rat).